Consider the following 408-residue polypeptide: Glutaryl-CoA dehydrogenase, mitochondrial (408 aa).

Residues 1–13 (KGGKTQGRSAKSS) constitute a mitochondrion transit peptide. Residues 107 to 108 (RS) and serine 156 each bind substrate. FAD contacts are provided by residues 147–156 (FGLTEPNHGS), serine 156, and 182–184 (WIT). An N6-acetyllysine modification is found at lysine 210. Residue 257–264 (FGCLNNAR) coordinates substrate. Residues arginine 289, glutamine 300, and 357–361 (DMLGG) each bind FAD. The Proton acceptor role is filled by glutamate 384. Residue glycine 385 participates in substrate binding. FAD is bound by residues threonine 386, 386-388 (THD), and phenylalanine 404.

The protein belongs to the acyl-CoA dehydrogenase family. In terms of assembly, homotetramer. FAD is required as a cofactor.

It localises to the mitochondrion matrix. The catalysed reaction is glutaryl-CoA + oxidized [electron-transfer flavoprotein] + 2 H(+) = (2E)-butenoyl-CoA + reduced [electron-transfer flavoprotein] + CO2. It participates in amino-acid metabolism; lysine degradation. It functions in the pathway amino-acid metabolism; tryptophan metabolism. In terms of biological role, catalyzes the oxidative decarboxylation of glutaryl-CoA to crotonyl-CoA and CO(2) in the degradative pathway of L-lysine, L-hydroxylysine, and L-tryptophan metabolism. It uses electron transfer flavoprotein as its electron acceptor. This Sus scrofa (Pig) protein is Glutaryl-CoA dehydrogenase, mitochondrial (GCDH).